The primary structure comprises 381 residues: Alkanesulfonate monooxygenase (381 aa).

This sequence belongs to the SsuD family. As to quaternary structure, homotetramer.

The enzyme catalyses an alkanesulfonate + FMNH2 + O2 = an aldehyde + FMN + sulfite + H2O + 2 H(+). Its function is as follows. Catalyzes the desulfonation of aliphatic sulfonates. The polypeptide is Alkanesulfonate monooxygenase (Escherichia coli O81 (strain ED1a)).